The primary structure comprises 253 residues: UPF0280 protein MA_1715 (253 aa).

This sequence belongs to the UPF0280 family.

The sequence is that of UPF0280 protein MA_1715 from Methanosarcina acetivorans (strain ATCC 35395 / DSM 2834 / JCM 12185 / C2A).